The chain runs to 759 residues: Inhibitor of nuclear factor kappa-B kinase subunit alpha (759 aa).

Positions 1–20 (MERGAERGPPPAPGGVALRG) are disordered. In terms of domain architecture, Protein kinase spans 29 to 316 (WEMRDRLGTG…PETNSPKCFL (288 aa)). ATP is bound by residues 35–43 (LGTGGFGNV) and K58. Catalysis depends on D158, which acts as the Proton acceptor. The tract at residues 469–490 (LLRYNANLIKMKNNMVSASQQL) is leucine-zipper. Residues 691–703 (TPAATWVPQSSSE) show a composition bias toward polar residues. The disordered stretch occupies residues 691-715 (TPAATWVPQSSSEYAPHPLSSMATP). The segment at 753–758 (FDWSWL) is NEMO-binding.

Belongs to the protein kinase superfamily. Ser/Thr protein kinase family. I-kappa-B kinase subfamily.

It is found in the cytoplasm. Its subcellular location is the nucleus. The enzyme catalyses L-seryl-[I-kappa-B protein] + ATP = O-phospho-L-seryl-[I-kappa-B protein] + ADP + H(+). With respect to regulation, activated when phosphorylated and inactivated when dephosphorylated. In terms of biological role, phosphorylates inhibitors of NF-kappa-B thus leading to the dissociation of the inhibitor/NF-kappa-B complex and ultimately the degradation of the inhibitor. Phosphorylates 'Ser-10' of histone H3 at NF-kappa-B-regulated promoters during inflammatory responses triggered by cytokines. The protein is Inhibitor of nuclear factor kappa-B kinase subunit alpha (CHUK) of Gallus gallus (Chicken).